We begin with the raw amino-acid sequence, 148 residues long: Deoxyuridine 5'-triphosphate nucleotidohydrolase (148 aa).

Residues 67–69 (RSG), Asn80, 84–86 (LID), and Met94 each bind substrate.

This sequence belongs to the dUTPase family. Mg(2+) serves as cofactor.

It carries out the reaction dUTP + H2O = dUMP + diphosphate + H(+). Its pathway is pyrimidine metabolism; dUMP biosynthesis; dUMP from dCTP (dUTP route): step 2/2. This enzyme is involved in nucleotide metabolism: it produces dUMP, the immediate precursor of thymidine nucleotides and it decreases the intracellular concentration of dUTP so that uracil cannot be incorporated into DNA. The sequence is that of Deoxyuridine 5'-triphosphate nucleotidohydrolase from Burkholderia multivorans (strain ATCC 17616 / 249).